The primary structure comprises 63 residues: Large ribosomal subunit protein bL28 (63 aa).

Belongs to the bacterial ribosomal protein bL28 family.

In Treponema denticola (strain ATCC 35405 / DSM 14222 / CIP 103919 / JCM 8153 / KCTC 15104), this protein is Large ribosomal subunit protein bL28.